The primary structure comprises 180 residues: Urease accessory protein UreE (180 aa).

Positions 71–90 are disordered; that stretch reads AAPSGAGHGDGEQDGTGAPG.

It belongs to the UreE family.

The protein resides in the cytoplasm. Functionally, involved in urease metallocenter assembly. Binds nickel. Probably functions as a nickel donor during metallocenter assembly. This is Urease accessory protein UreE from Kocuria rhizophila (strain ATCC 9341 / DSM 348 / NBRC 103217 / DC2201).